The sequence spans 338 residues: Anthocyanidin reductase ((2S)-flavan-3-ol-forming) (338 aa).

NADP(+) contacts are provided by residues 18–21 (TGFV), lysine 48, 87–90 (VATP), and tyrosine 168.

It belongs to the NAD(P)-dependent epimerase/dehydratase family. Dihydroflavonol-4-reductase subfamily. Expressed in seeds, grape skins, flowers and leaves.

The enzyme catalyses a (2S,3R)-flavan-3-ol + 2 NADP(+) = an anthocyanidin with a 3-hydroxy group + 2 NADPH + 2 H(+). The catalysed reaction is a (2S,3S)-flavan-3-ol + 2 NADP(+) = an anthocyanidin with a 3-hydroxy group + 2 NADPH + 2 H(+). It participates in secondary metabolite biosynthesis; flavonoid biosynthesis. With respect to regulation, inhibited at NaCl concentrations higher than 200 mM. Produces the terminal flavan-3-ol monomers required for the formation of proanthocyanidins or condensed tannins in leaves and flowers, as well as in the skin and seeds of developing berries. Behaves as a reductase and as a C-3 epimerase. Catalyzes the double reduction of anthocyanidins, producing a mixture of (2S,3S)- and (2S,3R)-flavan-3-ols. The enzyme catalyzes sequential hydride transfers to C-2 and C-4, respectively and epimerization at C-3 is achieved by tautomerization that occurs between the two hydride transfers. Converts cyanidin, pelargonidin and delphinidin into catechin and epicatechin, afzelechin and epiafzelechin, and gallocatechin and epigallocatechin respectively. In Vitis vinifera (Grape), this protein is Anthocyanidin reductase ((2S)-flavan-3-ol-forming).